Consider the following 474-residue polypeptide: Synaptotagmin-17 (474 aa).

The disordered stretch occupies residues 60-112 (WLMASRSSDKDGDSVHTASEVPLTPRTNSPDGRRSSSDTSKSTYSLTRRISSL). The segment covering 96–112 (SDTSKSTYSLTRRISSL) has biased composition (low complexity). A phosphoserine mark is found at Ser118 and Ser119. 2 C2 domains span residues 184–310 (QLGM…HWWK) and 321–455 (ELGE…EQWH).

Belongs to the synaptotagmin family.

The protein localises to the membrane. Functionally, plays a role in dendrite formation by melanocytes. The sequence is that of Synaptotagmin-17 (SYT17) from Pongo abelii (Sumatran orangutan).